Reading from the N-terminus, the 108-residue chain is Small ribosomal subunit protein mS33 (108 aa).

The tract at residues 84–108 (LRARDKGAPKKKRTAPSAADAKKKK) is disordered.

Belongs to the mitochondrion-specific ribosomal protein mS33 family. In terms of assembly, component of the mitochondrial small ribosomal subunit (mt-SSU). Mature N.crassa 74S mitochondrial ribosomes consist of a small (37S) and a large (54S) subunit. The 37S small subunit contains a 16S ribosomal RNA (16S mt-rRNA) and 32 different proteins. The 54S large subunit contains a 23S rRNA (23S mt-rRNA) and 42 different proteins.

The protein localises to the mitochondrion. In terms of biological role, component of the mitochondrial ribosome (mitoribosome), a dedicated translation machinery responsible for the synthesis of mitochondrial genome-encoded proteins, including at least some of the essential transmembrane subunits of the mitochondrial respiratory chain. The mitoribosomes are attached to the mitochondrial inner membrane and translation products are cotranslationally integrated into the membrane. The polypeptide is Small ribosomal subunit protein mS33 (rsm27) (Neurospora crassa (strain ATCC 24698 / 74-OR23-1A / CBS 708.71 / DSM 1257 / FGSC 987)).